The sequence spans 227 residues: Cytochrome c oxidase subunit 2 (227 aa).

The Mitochondrial intermembrane portion of the chain corresponds to 1–14 (MAYPFELGFQDATS). The helical transmembrane segment at 15–45 (PIMEELLHFHDHTLMIVFLISSLVLYIISLM) threads the bilayer. Residues 46–59 (LTTKLTHTSTMDAQ) are Mitochondrial matrix-facing. The chain crosses the membrane as a helical span at residues 60 to 87 (EVETIWTILPAIILILIALPSLRILYMM). Residues 88 to 227 (DEINDPSLTV…HFENWSSSML (140 aa)) lie on the Mitochondrial intermembrane side of the membrane. Residues His161, Cys196, Glu198, Cys200, His204, and Met207 each contribute to the Cu cation site. Glu198 lines the Mg(2+) pocket.

The protein belongs to the cytochrome c oxidase subunit 2 family. Component of the cytochrome c oxidase (complex IV, CIV), a multisubunit enzyme composed of 14 subunits. The complex is composed of a catalytic core of 3 subunits MT-CO1, MT-CO2 and MT-CO3, encoded in the mitochondrial DNA, and 11 supernumerary subunits COX4I, COX5A, COX5B, COX6A, COX6B, COX6C, COX7A, COX7B, COX7C, COX8 and NDUFA4, which are encoded in the nuclear genome. The complex exists as a monomer or a dimer and forms supercomplexes (SCs) in the inner mitochondrial membrane with NADH-ubiquinone oxidoreductase (complex I, CI) and ubiquinol-cytochrome c oxidoreductase (cytochrome b-c1 complex, complex III, CIII), resulting in different assemblies (supercomplex SCI(1)III(2)IV(1) and megacomplex MCI(2)III(2)IV(2)). Found in a complex with TMEM177, COA6, COX18, COX20, SCO1 and SCO2. Interacts with TMEM177 in a COX20-dependent manner. Interacts with COX20. Interacts with COX16. The cofactor is Cu cation.

The protein resides in the mitochondrion inner membrane. The enzyme catalyses 4 Fe(II)-[cytochrome c] + O2 + 8 H(+)(in) = 4 Fe(III)-[cytochrome c] + 2 H2O + 4 H(+)(out). In terms of biological role, component of the cytochrome c oxidase, the last enzyme in the mitochondrial electron transport chain which drives oxidative phosphorylation. The respiratory chain contains 3 multisubunit complexes succinate dehydrogenase (complex II, CII), ubiquinol-cytochrome c oxidoreductase (cytochrome b-c1 complex, complex III, CIII) and cytochrome c oxidase (complex IV, CIV), that cooperate to transfer electrons derived from NADH and succinate to molecular oxygen, creating an electrochemical gradient over the inner membrane that drives transmembrane transport and the ATP synthase. Cytochrome c oxidase is the component of the respiratory chain that catalyzes the reduction of oxygen to water. Electrons originating from reduced cytochrome c in the intermembrane space (IMS) are transferred via the dinuclear copper A center (CU(A)) of subunit 2 and heme A of subunit 1 to the active site in subunit 1, a binuclear center (BNC) formed by heme A3 and copper B (CU(B)). The BNC reduces molecular oxygen to 2 water molecules using 4 electrons from cytochrome c in the IMS and 4 protons from the mitochondrial matrix. The chain is Cytochrome c oxidase subunit 2 (MT-CO2) from Tamias amoenus (Yellow-pine chipmunk).